The following is a 689-amino-acid chain: uncharacterized protein (689 aa).

2 stretches are compositionally biased toward low complexity: residues 347-359 (RPPS…AGEP) and 370-388 (ASTA…TRPT). The segment at 347–689 (RPPSGSGEAA…KSQPPAAHTA (343 aa)) is disordered. Residues 405–480 (ARPESEEQTD…QESQVARRDE (76 aa)) are compositionally biased toward basic and acidic residues. 2 stretches are compositionally biased toward pro residues: residues 515 to 539 (VPGP…PPMT) and 550 to 569 (RCPP…PPRP). Low complexity-rich tracts occupy residues 570–581 (SSDTPLSAVSRP) and 591–610 (TARV…YSPA). Positions 611–620 (PLSPPSPVSP) are enriched in pro residues. Low complexity predominate over residues 666–676 (SVPSSASPSAS).

This is an uncharacterized protein from Homo sapiens (Human).